A 73-amino-acid polypeptide reads, in one-letter code: Cytochrome b559 subunit alpha (73 aa).

The helical transmembrane segment at 21–35 (IIHSITVPSLFIAGW) threads the bilayer. Residue His-23 coordinates heme.

It belongs to the PsbE/PsbF family. As to quaternary structure, heterodimer of an alpha subunit and a beta subunit. PSII is composed of 1 copy each of membrane proteins PsbA, PsbB, PsbC, PsbD, PsbE, PsbF, PsbH, PsbI, PsbJ, PsbK, PsbL, PsbM, PsbT, PsbY, PsbZ, Psb30/Ycf12, at least 3 peripheral proteins of the oxygen-evolving complex and a large number of cofactors. It forms dimeric complexes. It depends on heme b as a cofactor.

The protein resides in the plastid. It localises to the chloroplast thylakoid membrane. In terms of biological role, this b-type cytochrome is tightly associated with the reaction center of photosystem II (PSII). PSII is a light-driven water:plastoquinone oxidoreductase that uses light energy to abstract electrons from H(2)O, generating O(2) and a proton gradient subsequently used for ATP formation. It consists of a core antenna complex that captures photons, and an electron transfer chain that converts photonic excitation into a charge separation. The sequence is that of Cytochrome b559 subunit alpha from Bigelowiella natans (Pedinomonas minutissima).